Reading from the N-terminus, the 292-residue chain is Protease HtpX homolog (292 aa).

Transmembrane regions (helical) follow at residues 9 to 29 and 31 to 51; these read TGVL…VLGN and TGMM…YWYS. His-133 lines the Zn(2+) pocket. Glu-134 is an active-site residue. His-137 provides a ligand contact to Zn(2+). 2 consecutive transmembrane segments (helical) span residues 148 to 168 and 185 to 205; these read LAAV…WMLW and LGAI…QMAI. Zn(2+) is bound at residue Glu-210.

The protein belongs to the peptidase M48B family. It depends on Zn(2+) as a cofactor.

The protein resides in the cell membrane. In Thermococcus sibiricus (strain DSM 12597 / MM 739), this protein is Protease HtpX homolog.